We begin with the raw amino-acid sequence, 870 residues long: Leucine--tRNA ligase (870 aa).

A 'HIGH' region motif is present at residues 43–53 (PYPSGRIHMGH). Residues 630 to 634 (KMSKS) carry the 'KMSKS' region motif. Residue lysine 633 participates in ATP binding.

The protein belongs to the class-I aminoacyl-tRNA synthetase family.

The protein localises to the cytoplasm. The catalysed reaction is tRNA(Leu) + L-leucine + ATP = L-leucyl-tRNA(Leu) + AMP + diphosphate. The sequence is that of Leucine--tRNA ligase from Parvibaculum lavamentivorans (strain DS-1 / DSM 13023 / NCIMB 13966).